The sequence spans 74 residues: Metallothionein-like protein type 2 (74 aa).

It belongs to the metallothionein superfamily. Type 15 family.

Functionally, metallothioneins have a high content of cysteine residues that bind various heavy metals. The protein is Metallothionein-like protein type 2 of Nicotiana plumbaginifolia (Leadwort-leaved tobacco).